The sequence spans 63 residues: Bowman-birk type proteinase inhibitor (63 aa).

Disulfide bonds link Cys-7–Cys-61, Cys-8–Cys-23, Cys-11–Cys-57, Cys-13–Cys-21, Cys-31–Cys-38, Cys-35–Cys-50, and Cys-40–Cys-48.

Its function is as follows. Inhibits trypsin, chymotrypsin, plasmin and factor XIIa. Does not inhibit factor Xa, thrombin and plasma kallikrein. This chain is Bowman-birk type proteinase inhibitor, found in Amburana acreana (Cerejeira).